The chain runs to 161 residues: MSEISTALSLENCPCQSSHHYADCCGKFHLRQAFPETAEQLMRSRYTAYVLKNIPYIVVTTAPSQQTLLKPRLLQEWADNTTWLGLEILKTESLTKTQSAVEFKAIFQGEEGELAHQERSIFVKIENRWYFVDPTVSLPTMKQPCVCGYGKKFKHCCGGFL.

The protein belongs to the UPF0225 family.

The polypeptide is UPF0225 protein NTHI0386 (Haemophilus influenzae (strain 86-028NP)).